Here is a 150-residue protein sequence, read N- to C-terminus: Globin-5 (150 aa).

The Globin domain occupies 11–150 (PLSAAEKTKI…MICILLRSAY (140 aa)). Heme b-binding residues include H74 and H106.

This sequence belongs to the globin family. Monomer at high oxygen tension and high pH and dimeric at low oxygen tension and lower pH.

This is Globin-5 from Petromyzon marinus (Sea lamprey).